Consider the following 610-residue polypeptide: Elongation factor 4 (610 aa).

Positions 7-189 (SRIRNFSIIA…AIVQRIPPPK (183 aa)) constitute a tr-type G domain. GTP is bound by residues 19 to 24 (DHGKST) and 136 to 139 (NKID).

The protein belongs to the TRAFAC class translation factor GTPase superfamily. Classic translation factor GTPase family. LepA subfamily.

The protein localises to the cell inner membrane. The enzyme catalyses GTP + H2O = GDP + phosphate + H(+). In terms of biological role, required for accurate and efficient protein synthesis under certain stress conditions. May act as a fidelity factor of the translation reaction, by catalyzing a one-codon backward translocation of tRNAs on improperly translocated ribosomes. Back-translocation proceeds from a post-translocation (POST) complex to a pre-translocation (PRE) complex, thus giving elongation factor G a second chance to translocate the tRNAs correctly. Binds to ribosomes in a GTP-dependent manner. This Thermus thermophilus (strain ATCC BAA-163 / DSM 7039 / HB27) protein is Elongation factor 4.